We begin with the raw amino-acid sequence, 180 residues long: Large ribosomal subunit protein uL15 (180 aa).

The segment at 1-62 is disordered; it reads MKKERLEQAA…KTAGRGSKGQ (62 aa). Positions 35–44 are enriched in basic residues; sequence GAKKEKKRVG.

The protein belongs to the universal ribosomal protein uL15 family. Part of the 50S ribosomal subunit.

Its function is as follows. Binds to the 23S rRNA. This chain is Large ribosomal subunit protein uL15, found in Leptospira borgpetersenii serovar Hardjo-bovis (strain JB197).